A 320-amino-acid chain; its full sequence is Beta-sarcoglycan (320 aa).

Over residues 1-10 (MAAAAAAAAA) the composition is skewed to low complexity. The disordered stretch occupies residues 1-34 (MAAAAAAAAATEQQGSNGPVKKSMREKAVERRNV). Residues 1 to 67 (MAAAAAAAAA…GLRGRKGNLA (67 aa)) are Cytoplasmic-facing. Residues 23-34 (SMREKAVERRNV) show a composition bias toward basic and acidic residues. Residues 68–88 (ICVIVLLFILAVINLLITLVI) form a helical; Signal-anchor for type II membrane protein membrane-spanning segment. Residues 89 to 320 (WAVIRIGPNG…VSDNPCGNTH (232 aa)) are Extracellular-facing. 3 N-linked (GlcNAc...) asparagine glycosylation sites follow: asparagine 160, asparagine 213, and asparagine 260. 2 disulfide bridges follow: cysteine 290/cysteine 316 and cysteine 292/cysteine 309.

The protein belongs to the sarcoglycan beta/delta/gamma/zeta family. Cross-link to form 2 major subcomplexes: one consisting of SGCB, SGCD and SGCG and the other consisting of SGCB and SGCD. The association between SGCB and SGCG is particularly strong while SGCA is loosely associated with the other sarcoglycans. Post-translationally, disulfide bonds are present. In terms of tissue distribution, most strongly expressed in skeletal and heart muscle. Also detected in proliferating myoblasts.

The protein localises to the cell membrane. It localises to the sarcolemma. Its subcellular location is the cytoplasm. It is found in the cytoskeleton. Component of the sarcoglycan complex, a subcomplex of the dystrophin-glycoprotein complex which forms a link between the F-actin cytoskeleton and the extracellular matrix. The polypeptide is Beta-sarcoglycan (Sgcb) (Mus musculus (Mouse)).